A 125-amino-acid chain; its full sequence is Probable prefoldin subunit 6 (125 aa).

The protein belongs to the prefoldin subunit beta family. Heterohexamer of two PFD-alpha type and four PFD-beta type subunits.

Binds specifically to cytosolic chaperonin (c-CPN) and transfers target proteins to it. Binds to nascent polypeptide chain and promotes folding in an environment in which there are many competing pathways for nonnative proteins. This is Probable prefoldin subunit 6 from Drosophila melanogaster (Fruit fly).